We begin with the raw amino-acid sequence, 298 residues long: ATP synthase gamma chain (298 aa).

This sequence belongs to the ATPase gamma chain family. In terms of assembly, F-type ATPases have 2 components, CF(1) - the catalytic core - and CF(0) - the membrane proton channel. CF(1) has five subunits: alpha(3), beta(3), gamma(1), delta(1), epsilon(1). CF(0) has three main subunits: a, b and c.

The protein localises to the cell membrane. Produces ATP from ADP in the presence of a proton gradient across the membrane. The gamma chain is believed to be important in regulating ATPase activity and the flow of protons through the CF(0) complex. This is ATP synthase gamma chain from Frankia casuarinae (strain DSM 45818 / CECT 9043 / HFP020203 / CcI3).